A 152-amino-acid polypeptide reads, in one-letter code: Glutamyl-tRNA(Gln) amidotransferase subunit F, mitochondrial (152 aa).

This sequence belongs to the GatF family. In terms of assembly, subunit of the heterotrimeric GatFAB amidotransferase (AdT) complex, composed of A, B and F subunits.

It localises to the mitochondrion inner membrane. It carries out the reaction L-glutamyl-tRNA(Gln) + L-glutamine + ATP + H2O = L-glutaminyl-tRNA(Gln) + L-glutamate + ADP + phosphate + H(+). In terms of biological role, allows the formation of correctly charged Gln-tRNA(Gln) through the transamidation of misacylated Glu-tRNA(Gln) in the mitochondria. The reaction takes place in the presence of glutamine and ATP through an activated gamma-phospho-Glu-tRNA(Gln). Required for proper protein synthesis within the mitochondrion. The polypeptide is Glutamyl-tRNA(Gln) amidotransferase subunit F, mitochondrial (Komagataella phaffii (strain GS115 / ATCC 20864) (Yeast)).